A 129-amino-acid polypeptide reads, in one-letter code: Small ribosomal subunit protein uS11 (129 aa).

It belongs to the universal ribosomal protein uS11 family. In terms of assembly, part of the 30S ribosomal subunit. Interacts with proteins S7 and S18. Binds to IF-3.

Located on the platform of the 30S subunit, it bridges several disparate RNA helices of the 16S rRNA. Forms part of the Shine-Dalgarno cleft in the 70S ribosome. This Bacillus mycoides (strain KBAB4) (Bacillus weihenstephanensis) protein is Small ribosomal subunit protein uS11.